A 141-amino-acid chain; its full sequence is Hemoglobin subunit alpha (141 aa).

Residues 2–141 (AFTACEKQTI…ICQELSSRYR (140 aa)) form the Globin domain. An O2-binding site is contributed by His-59. His-88 lines the heme b pocket.

It belongs to the globin family. As to quaternary structure, heterotetramer of two alpha chains and two beta chains. Red blood cells.

Functionally, involved in oxygen transport from gills to the various peripheral tissues. This chain is Hemoglobin subunit alpha (HBA), found in Mustelus griseus (Spotless smooth-hound).